Here is a 327-residue protein sequence, read N- to C-terminus: ATPase GET3 (327 aa).

Position 27–34 (27–34 (KGGVGKTT)) interacts with ATP. Aspartate 56 is a catalytic residue. 2 residues coordinate ATP: glutamate 231 and asparagine 258. Zn(2+)-binding residues include cysteine 269 and cysteine 272.

This sequence belongs to the arsA ATPase family. In terms of assembly, homodimer. Component of the Golgi to ER traffic (GET) complex, which is composed of GET1, GET2 and GET3. Within the complex, GET1 and GET2 form a heterotetramer which is stabilized by phosphatidylinositol binding and which binds to the GET3 homodimer. Interacts with the chloride channel protein GEF1.

The protein localises to the cytoplasm. It is found in the endoplasmic reticulum. It localises to the golgi apparatus. In terms of biological role, ATPase required for the post-translational delivery of tail-anchored (TA) proteins to the endoplasmic reticulum. Recognizes and selectively binds the transmembrane domain of TA proteins in the cytosol. This complex then targets to the endoplasmic reticulum by membrane-bound receptors GET1 and GET2, where the tail-anchored protein is released for insertion. This process is regulated by ATP binding and hydrolysis. ATP binding drives the homodimer towards the closed dimer state, facilitating recognition of newly synthesized TA membrane proteins. ATP hydrolysis is required for insertion. Subsequently, the homodimer reverts towards the open dimer state, lowering its affinity for the GET1-GET2 receptor, and returning it to the cytosol to initiate a new round of targeting. Cooperates with the HDEL receptor ERD2 to mediate the ATP-dependent retrieval of resident ER proteins that contain a C-terminal H-D-E-L retention signal from the Golgi to the ER. Involved in low-level resistance to the oxyanions arsenite and arsenate, and in heat tolerance. This is ATPase GET3 from Yarrowia lipolytica (strain CLIB 122 / E 150) (Yeast).